A 392-amino-acid chain; its full sequence is MSDMLPLATYSLNVEPYSPTPALNFKIPVTIRITMAAIDPEPFDDDKKPSTLRIIKRNPELTRGEYYNQDNNDGLEEDESESEQEADVPKRSVKSKKGKAVEQSESEDSEDENEIDDEFEECVLLTLSPKGQYQQALDITIAPEEDVQFVVTGSYTISLTGNYVKHPFDNSSDSDEDEEDYYSDEESSNGEEEEEEEEEDDEELSSGDDDLDDLVDASDIESRLDELVKKDEKKKNNKKDSKRKHEEDEEESAKPAEKKQTTKKDKKAEKVKDSEESKPKPKTKLLEGGIIIEDRVTGKGPHAKKGTRVGMRYVGKLKNGKVFDKNTKGKPFVFKLGQGEVIKGWDIGVAGMAVGGERRIVIPAPYAYGKQALPGIPANSELTFDVKLVSMK.

Disordered regions lie at residues 58–116 (NPEL…NEID) and 161–284 (GNYV…PKTK). Composition is skewed to acidic residues over residues 73-86 (DGLE…EQEA), 104-116 (SESE…NEID), and 172-219 (SDSD…DASD). 2 positions are modified to phosphoserine: serine 80 and serine 82. Composition is skewed to basic and acidic residues over residues 220–234 (IESR…DEKK) and 252–279 (SAKP…ESKP). Residues 306-392 (GTRVGMRYVG…TFDVKLVSMK (87 aa)) form the PPIase FKBP-type domain.

This sequence belongs to the FKBP-type PPIase family. FKBP3/4 subfamily. Binds to histones H3 and H4. Interacts with NOP53.

It is found in the nucleus. It catalyses the reaction [protein]-peptidylproline (omega=180) = [protein]-peptidylproline (omega=0). Its function is as follows. PPIase that acts as a histone chaperone. Histone proline isomerase that increases the rate of cis-trans isomerization at 'Pro-17' (H3P16), 'Pro-31' (H3P30) and 'Pro-39 (H3P38) on the histone H3 N-terminal tail. H3P16 and H3P30 are the major proline targets with little activity shown against H3P38. H3P38 isomerization influences SET2-mediated H3K36 methylation thereby regulating gene expression. This is FK506-binding protein 4 from Saccharomyces cerevisiae (strain ATCC 204508 / S288c) (Baker's yeast).